The sequence spans 358 residues: 3-dehydroquinate synthase (358 aa).

NAD(+)-binding positions include 104–108 (GVIGD), 128–129 (TT), K140, K149, and 167–170 (FLNT). Zn(2+) contacts are provided by E182, H246, and H260.

Belongs to the sugar phosphate cyclases superfamily. Dehydroquinate synthase family. It depends on Co(2+) as a cofactor. The cofactor is Zn(2+). Requires NAD(+) as cofactor.

It is found in the cytoplasm. The catalysed reaction is 7-phospho-2-dehydro-3-deoxy-D-arabino-heptonate = 3-dehydroquinate + phosphate. It participates in metabolic intermediate biosynthesis; chorismate biosynthesis; chorismate from D-erythrose 4-phosphate and phosphoenolpyruvate: step 2/7. Functionally, catalyzes the conversion of 3-deoxy-D-arabino-heptulosonate 7-phosphate (DAHP) to dehydroquinate (DHQ). The sequence is that of 3-dehydroquinate synthase from Staphylococcus carnosus (strain TM300).